The following is a 428-amino-acid chain: Enolase (428 aa).

Position 167 (Q167) interacts with (2R)-2-phosphoglycerate. The Proton donor role is filled by E209. Mg(2+) is bound by residues D246, E288, and D315. 4 residues coordinate (2R)-2-phosphoglycerate: K340, R369, S370, and K391. The active-site Proton acceptor is K340.

The protein belongs to the enolase family. In terms of assembly, component of the RNA degradosome, a multiprotein complex involved in RNA processing and mRNA degradation. Requires Mg(2+) as cofactor.

The protein resides in the cytoplasm. The protein localises to the secreted. It localises to the cell surface. The enzyme catalyses (2R)-2-phosphoglycerate = phosphoenolpyruvate + H2O. The protein operates within carbohydrate degradation; glycolysis; pyruvate from D-glyceraldehyde 3-phosphate: step 4/5. In terms of biological role, catalyzes the reversible conversion of 2-phosphoglycerate (2-PG) into phosphoenolpyruvate (PEP). It is essential for the degradation of carbohydrates via glycolysis. This is Enolase from Pseudomonas savastanoi pv. phaseolicola (strain 1448A / Race 6) (Pseudomonas syringae pv. phaseolicola (strain 1448A / Race 6)).